We begin with the raw amino-acid sequence, 585 residues long: MVCREQLSKNQVKWVFASITCVSAVAIAAIVLAITLRRPGCELEACSPDADMLDYLLSLGQISRRDALEVTWYHAANSKEAMTAALNSNITVLEADVNVEGLGTANETGVPIMAHPPAIYSDNTLEQWLDAVLGSSQKGIKLDFKNIKAVGPSLDLLRRLTEEGKVRRPIWINADILKGPNMLISTEVNATQFLALVREKYPKATLSPGWTTFYVSTSPNTTYTRAMVEKMHELVGGVPQRVTFPVRSSMVRAAWPHFSWLLSQSERYSLTLWQAASDPMSVEDLLYVRDNTAVHQVYYDIFEPLLSQFKQLALNATRKPMYYTGGSLIPLLQLPGDDGLNVEWLVPDVQGSGKTATMTLPDTEGMILLNTGLEGTVSENPVPIVHTPSGSILTLESCLQQLATHPGHWGIHLQIAEPAALRPSLALLARLSSLGLLHWPVWVGAKISHGSFSVPGHVAGRELLTAVAEVFPDVTVAPGWPEEVLGSGYREQLLTDMLELCQGLWQPVSFQMQAMLLGHSTAGAIARLLASSPRATVTVEYDPAGGDYASVRTALLAARAVDSTRVYYRLPQGYRKDLLADVGRN.

A helical membrane pass occupies residues 14–34 (WVFASITCVSAVAIAAIVLAI).

Belongs to the menorin family.

Its subcellular location is the membrane. The protein is Protein FAM151A (FAM151A) of Pongo abelii (Sumatran orangutan).